Consider the following 189-residue polypeptide: MGKAKKTRKFGLVKRTLNTKKDQRLKKNQENIKTKEDPELTRNIPQVSSALFFQYNQAIKPPYQVLIDTNFINFSIQKKVDIVRGMMDCLLAKCNPLITDCVMAELEKLGPKYRIALKLARDPRIKRLSCSHKGTYADDCLVHRVLQHKCYIVATNDAGLKQRIRKIPGIPLMSVGGHAYVIEKLPDVF.

The PINc domain maps to 63 to 162; that stretch reads YQVLIDTNFI…VATNDAGLKQ (100 aa).

This sequence belongs to the UTP23/FCF1 family. FCF1 subfamily. In terms of assembly, interacts with FAF1.

The protein resides in the nucleus. Its subcellular location is the nucleolus. Essential protein involved in pre-rRNA processing and 40S ribosomal subunit assembly. Required for the early cleavage steps of 35S rRNA at the A(0), A(1), and A(2) sites. In Saccharomyces cerevisiae (strain ATCC 204508 / S288c) (Baker's yeast), this protein is rRNA-processing protein FCF1 (FCF1).